Consider the following 459-residue polypeptide: Serine/threonine-protein kinase 12 (459 aa).

Residues M1–S30 are disordered. ANK repeat units lie at residues D42–Y71, D75–P104, and W108–M137. Positions V102–L417 constitute a Protein kinase domain. ATP contacts are provided by residues W108–A116 and K184. The active-site Proton acceptor is the D281.

This sequence belongs to the protein kinase superfamily. Ser/Thr protein kinase family. Interacts with BLUS1, PHOT1 and PHOT2. Accumulates in leaves, stems, petioles and roots, especially in guard cells.

The protein localises to the cytoplasm. Its subcellular location is the cytosol. The enzyme catalyses L-seryl-[protein] + ATP = O-phospho-L-seryl-[protein] + ADP + H(+). The catalysed reaction is L-threonyl-[protein] + ATP = O-phospho-L-threonyl-[protein] + ADP + H(+). Serine/threonine protein kinase that phosphorylates proteins on serine and threonine residues. Mediates blue light-dependent stomatal opening in guard cells by promoting plasma membrane-type ATPases (AHA1 and AHA2) phosphorylation. This chain is Serine/threonine-protein kinase 12, found in Arabidopsis thaliana (Mouse-ear cress).